The primary structure comprises 169 residues: Flagellar biosynthetic protein FliU (169 aa).

It belongs to the FliB family.

Its function is as follows. Required for the secretion of flagellin and expression of motility. This Salmonella muenchen protein is Flagellar biosynthetic protein FliU (fliU).